Consider the following 338-residue polypeptide: Ketol-acid reductoisomerase (NADP(+)) (338 aa).

One can recognise a KARI N-terminal Rossmann domain in the interval 1–181; sequence MNVYYDRDCD…GGGRTGIIET (181 aa). Residues 24 to 27, arginine 47, serine 50, serine 52, and 82 to 85 each bind NADP(+); these read YGSQ and DEFQ. Histidine 107 is an active-site residue. Glycine 133 contributes to the NADP(+) binding site. The KARI C-terminal knotted domain occupies 182–327; sequence TFKDETETDL…GNLRAMMPWI (146 aa). Residues aspartate 190, glutamate 194, glutamate 226, and glutamate 230 each coordinate Mg(2+). Serine 251 contacts substrate.

This sequence belongs to the ketol-acid reductoisomerase family. Mg(2+) serves as cofactor.

The catalysed reaction is (2R)-2,3-dihydroxy-3-methylbutanoate + NADP(+) = (2S)-2-acetolactate + NADPH + H(+). It carries out the reaction (2R,3R)-2,3-dihydroxy-3-methylpentanoate + NADP(+) = (S)-2-ethyl-2-hydroxy-3-oxobutanoate + NADPH + H(+). Its pathway is amino-acid biosynthesis; L-isoleucine biosynthesis; L-isoleucine from 2-oxobutanoate: step 2/4. It functions in the pathway amino-acid biosynthesis; L-valine biosynthesis; L-valine from pyruvate: step 2/4. Its function is as follows. Involved in the biosynthesis of branched-chain amino acids (BCAA). Catalyzes an alkyl-migration followed by a ketol-acid reduction of (S)-2-acetolactate (S2AL) to yield (R)-2,3-dihydroxy-isovalerate. In the isomerase reaction, S2AL is rearranged via a Mg-dependent methyl migration to produce 3-hydroxy-3-methyl-2-ketobutyrate (HMKB). In the reductase reaction, this 2-ketoacid undergoes a metal-dependent reduction by NADPH to yield (R)-2,3-dihydroxy-isovalerate. The polypeptide is Ketol-acid reductoisomerase (NADP(+)) (Trichlorobacter lovleyi (strain ATCC BAA-1151 / DSM 17278 / SZ) (Geobacter lovleyi)).